The primary structure comprises 890 residues: Translation initiation factor IF-2 (890 aa).

Disordered stretches follow at residues 31–164 (KLAQ…PAEP) and 189–266 (FKAP…ESLK). Over residues 42–54 (SSSEKPSAKEKSV) the composition is skewed to basic and acidic residues. Residues 55-72 (KVALAATSTPTASAEQAS) are compositionally biased toward low complexity. The segment covering 114 to 128 (PEPELEVVDEVCDES) has biased composition (acidic residues). 2 stretches are compositionally biased toward basic and acidic residues: residues 149 to 163 (PQEK…KPAE) and 242 to 266 (PKRD…ESLK). Positions 395 to 564 (IRSPIVAFMG…ALQAEVLELK (170 aa)) constitute a tr-type G domain. Residues 404-411 (GHVDHGKT) are G1. 404–411 (GHVDHGKT) is a binding site for GTP. Residues 429–433 (AITQH) are G2. Positions 450–453 (DTPG) are G3. GTP is bound by residues 450–454 (DTPGH) and 504–507 (NKCD). A G4 region spans residues 504-507 (NKCD). The tract at residues 540 to 542 (SAK) is G5.

The protein belongs to the TRAFAC class translation factor GTPase superfamily. Classic translation factor GTPase family. IF-2 subfamily.

Its subcellular location is the cytoplasm. In terms of biological role, one of the essential components for the initiation of protein synthesis. Protects formylmethionyl-tRNA from spontaneous hydrolysis and promotes its binding to the 30S ribosomal subunits. Also involved in the hydrolysis of GTP during the formation of the 70S ribosomal complex. The sequence is that of Translation initiation factor IF-2 (infB) from Chlamydia pneumoniae (Chlamydophila pneumoniae).